We begin with the raw amino-acid sequence, 651 residues long: PTS system N-acetylglucosamine-specific EIICBA component (651 aa).

The 371-residue stretch at 1-371 (MNILGFFQRL…FNLKTPGRED (371 aa)) folds into the PTS EIIC type-1 domain. 12 consecutive transmembrane segments (helical) span residues 16 to 36 (LPIAVLPVAALLLRFGQPDLL), 40 to 60 (FIAQAGGAIFDNLALIFAIGV), 70 to 90 (GSAALAGAVGYFVMTKAMVTI), 92 to 112 (PEINMGVLAGIITGLVAGAVY), 132 to 152 (FVPIATGFFCLILAAIFGYVW), 165 to 185 (WIVSAGALGSGIFGFINRLLI), 192 to 212 (VLNTIAWFQIGEFTNAAGTVF), 232 to 252 (GFFPIMMFGLPGAALAMYLAA), 264 to 284 (LLSVAITAFLTGVTEPLEFLF), 285 to 305 (LFLAPLLYLLHAVLTGISLFI), 308 to 328 (ALGIHAGFSFSAGAIDYVLMY), and 339 to 359 (MLLVMGVVFFFVYFLLFSAVI). The 83-residue stretch at 390–472 (TQLATSYIAA…KKVVTRGPVA (83 aa)) folds into the PTS EIIB type-1 domain. Residue C412 is the Phosphocysteine intermediate; for EIIB activity of the active site. A Phosphocysteine; by EIIA modification is found at C412. Positions 519 to 623 (DEAFASKAVG…SMISPVVCSN (105 aa)) constitute a PTS EIIA type-1 domain. Zn(2+) is bound by residues H556 and H571. H571 (tele-phosphohistidine intermediate; for EIIA activity) is an active-site residue. A Phosphohistidine; by HPr modification is found at H571.

The cofactor is Zn(2+).

The protein resides in the cell inner membrane. The catalysed reaction is N(pros)-phospho-L-histidyl-[protein] + N-acetyl-D-glucosamine(out) = N-acetyl-D-glucosamine 6-phosphate(in) + L-histidyl-[protein]. The phosphoenolpyruvate-dependent sugar phosphotransferase system (sugar PTS), a major carbohydrate active transport system, catalyzes the phosphorylation of incoming sugar substrates concomitantly with their translocation across the cell membrane. This system is involved in N-acetylglucosamine transport. This chain is PTS system N-acetylglucosamine-specific EIICBA component (nagE), found in Klebsiella pneumoniae.